The following is a 689-amino-acid chain: UvrABC system protein C (689 aa).

The 80-residue stretch at 16–95 folds into the GIY-YIG domain; it reads TNPGVYRFRD…IKEFAPRFNI (80 aa). One can recognise a UVR domain in the interval 208-243; sequence KPYIRELTRQMNEAAECMDFETAAARRDDVGALERV. Positions 316–337 are disordered; it reads LAPAASGRRRTARHGSEDVVGQ.

It belongs to the UvrC family. Interacts with UvrB in an incision complex.

It is found in the cytoplasm. Its function is as follows. The UvrABC repair system catalyzes the recognition and processing of DNA lesions. UvrC both incises the 5' and 3' sides of the lesion. The N-terminal half is responsible for the 3' incision and the C-terminal half is responsible for the 5' incision. The sequence is that of UvrABC system protein C from Kocuria rhizophila (strain ATCC 9341 / DSM 348 / NBRC 103217 / DC2201).